Reading from the N-terminus, the 506-residue chain is Phase 2 flagellin (506 aa).

This sequence belongs to the bacterial flagellin family.

It localises to the secreted. The protein resides in the bacterial flagellum. Its function is as follows. Flagellin is the subunit protein which polymerizes to form the filaments of bacterial flagella. This Salmonella typhimurium (strain LT2 / SGSC1412 / ATCC 700720) protein is Phase 2 flagellin (fljB).